The following is an 834-amino-acid chain: Kinesin-like protein KIF18B (834 aa).

The 345-residue stretch at 9 to 353 (VVRVVVRVRP…LKYADRAKEI (345 aa)) folds into the Kinesin motor domain. Position 111–118 (111–118 (GATGAGKT)) interacts with ATP. Residues 368 to 404 (ISQYATICQQLQAEVAFLREKLQMYEAGAQALQQQCS) adopt a coiled-coil conformation. Disordered stretches follow at residues 400 to 508 (QQQC…ADHS), 602 to 642 (LGAP…NLEM), 655 to 686 (RGSLPKAQPCSEPRTPKRERASSPSPSSRVCP), and 800 to 834 (KKPNRPFTVPEPPLSPHCLDDQRTPKGLTGVTESY). Residues 411–432 (SIPQSLSSSSLQPGPSSQSSTL) show a composition bias toward low complexity. The residue at position 431 (Thr-431) is a Phosphothreonine. A compositionally biased stretch (polar residues) spans 462–474 (EQEQCPQDKQCPT). Ser-484 bears the Phosphoserine mark. A compositionally biased stretch (basic and acidic residues) spans 611 to 620 (TSDKTFQKPT). Positions 619–627 (PTKEKKRKL) match the Nuclear localization signal motif. 2 positions are modified to phosphoserine: Ser-634 and Ser-657. Thr-669 bears the Phosphothreonine mark. Phosphoserine is present on Ser-814.

It belongs to the TRAFAC class myosin-kinesin ATPase superfamily. Kinesin family. In terms of assembly, interacts with MAPRE1; this interaction is required for efficient accumulation at microtubule plus ends. Interacts with KIF2C at microtubule tips; this interaction increases the affinity of both partners for microtubule plus ends and is required for robust microtubule depolymerization. KIF2C phosphorylation by AURKA or AURKB strongly reduces KIF18B-binding.

The protein resides in the nucleus. Its subcellular location is the cytoplasm. It is found in the cytoskeleton. In terms of biological role, in complex with KIF2C, constitutes the major microtubule plus-end depolymerizing activity in mitotic cells. Its major role may be to transport KIF2C and/or MAPRE1 along microtubules. This is Kinesin-like protein KIF18B (Kif18b) from Mus musculus (Mouse).